The chain runs to 194 residues: ATP-dependent Clp protease proteolytic subunit 3 (194 aa).

Ser-96 functions as the Nucleophile in the catalytic mechanism. His-121 is an active-site residue.

This sequence belongs to the peptidase S14 family. In terms of assembly, fourteen ClpP subunits assemble into 2 heptameric rings which stack back to back to give a disk-like structure with a central cavity, resembling the structure of eukaryotic proteasomes.

Its subcellular location is the cytoplasm. It carries out the reaction Hydrolysis of proteins to small peptides in the presence of ATP and magnesium. alpha-casein is the usual test substrate. In the absence of ATP, only oligopeptides shorter than five residues are hydrolyzed (such as succinyl-Leu-Tyr-|-NHMec, and Leu-Tyr-Leu-|-Tyr-Trp, in which cleavage of the -Tyr-|-Leu- and -Tyr-|-Trp bonds also occurs).. Its function is as follows. Cleaves peptides in various proteins in a process that requires ATP hydrolysis. Has a chymotrypsin-like activity. Plays a major role in the degradation of misfolded proteins. The chain is ATP-dependent Clp protease proteolytic subunit 3 from Rhizobium etli (strain ATCC 51251 / DSM 11541 / JCM 21823 / NBRC 15573 / CFN 42).